The sequence spans 382 residues: Dual-specificity RNA methyltransferase RlmN (382 aa).

The active-site Proton acceptor is the Glu94. The Radical SAM core domain maps to 100 to 336; that stretch reads EANRGTLCVS…NTITRKTRGD (237 aa). Cys107 and Cys342 form a disulfide bridge. The [4Fe-4S] cluster site is built by Cys114, Cys118, and Cys121. Residues 168 to 169, Ser200, 222 to 224, and Asn299 each bind S-adenosyl-L-methionine; these read GE and SLH. The S-methylcysteine intermediate role is filled by Cys342.

The protein belongs to the radical SAM superfamily. RlmN family. It depends on [4Fe-4S] cluster as a cofactor.

The protein resides in the cytoplasm. The catalysed reaction is adenosine(2503) in 23S rRNA + 2 reduced [2Fe-2S]-[ferredoxin] + 2 S-adenosyl-L-methionine = 2-methyladenosine(2503) in 23S rRNA + 5'-deoxyadenosine + L-methionine + 2 oxidized [2Fe-2S]-[ferredoxin] + S-adenosyl-L-homocysteine. It carries out the reaction adenosine(37) in tRNA + 2 reduced [2Fe-2S]-[ferredoxin] + 2 S-adenosyl-L-methionine = 2-methyladenosine(37) in tRNA + 5'-deoxyadenosine + L-methionine + 2 oxidized [2Fe-2S]-[ferredoxin] + S-adenosyl-L-homocysteine. Its function is as follows. Specifically methylates position 2 of adenine 2503 in 23S rRNA and position 2 of adenine 37 in tRNAs. m2A2503 modification seems to play a crucial role in the proofreading step occurring at the peptidyl transferase center and thus would serve to optimize ribosomal fidelity. The protein is Dual-specificity RNA methyltransferase RlmN of Legionella pneumophila (strain Lens).